Consider the following 301-residue polypeptide: Nucleosome assembly protein 1;3 (301 aa).

Residues 15-69 (VETLKNKLQALAEQHVDVLESLAPVVRKRVDVLIEIQSQHDELEAKFLEEKAALE) are a coiled coil. Positions 36 to 51 (LAPVVRKRVDVLIEIQ) match the Nuclear export signal motif. The segment at 278 to 301 (DEDYGASWVDDEEDDDDEYSDEEA) is disordered.

The protein belongs to the nucleosome assembly protein (NAP) family.

Its subcellular location is the nucleus. It is found in the cytoplasm. Its function is as follows. May modulate chromatin structure by regulation of nucleosome assembly/disassembly. In Oryza sativa subsp. japonica (Rice), this protein is Nucleosome assembly protein 1;3 (NAP1;3).